A 353-amino-acid polypeptide reads, in one-letter code: Green-sensitive opsin-2 (353 aa).

Over 1-47 the chain is Extracellular; it reads MAAHEPVFAARRHNEDTTRESAFVYTNANNTRDPFEGPNYHIAPRWV. N-linked (GlcNAc...) asparagine glycosylation is present at N29. A helical membrane pass occupies residues 48–72; that stretch reads YNVSSLWMIFVVIASVFTNGLVIVA. The Cytoplasmic portion of the chain corresponds to 73-84; that stretch reads TAKFKKLRHPLN. A helical transmembrane segment spans residues 85–110; it reads WILVNLAIADLGETVLASTISVINQI. Residues 111 to 124 are Extracellular-facing; it reads FGYFILGHPMCVFE. C121 and C198 are oxidised to a cystine. Residues 125–144 traverse the membrane as a helical segment; sequence GWTVSVCGITALWSLTIISW. Residues 145–163 are Cytoplasmic-facing; it reads ERWVVVCKPFGNVKFDGKW. Residues 164–187 form a helical membrane-spanning segment; that stretch reads AAGGIIFSWVWAIIWCTPPIFGWS. The Extracellular segment spans residues 188–213; it reads RYWPHGLKTSCGPDVFSGSEDPGVAS. Residues 214–241 traverse the membrane as a helical segment; it reads YMITLMLTCCILPLSIIIICYIFVWSAI. Over 242–263 the chain is Cytoplasmic; sequence HQVAQQQKDSESTQKAEKEVSR. A helical membrane pass occupies residues 264–287; it reads MVVVMILAFIVCWGPYASFATFSA. Residues 288–295 are Extracellular-facing; that stretch reads VNPGYAWH. A helical transmembrane segment spans residues 296 to 320; sequence PLAAAMPAYFAKSATIYNPIIYVFM. Position 307 is an N6-(retinylidene)lysine (K307). Over 321 to 353 the chain is Cytoplasmic; the sequence is NRQFRSCIMQLFGKKVEDASEVSGSTTEVSTAS.

This sequence belongs to the G-protein coupled receptor 1 family. Opsin subfamily. The color pigments are found in the cone photoreceptor cells.

The protein resides in the membrane. Functionally, visual pigments are the light-absorbing molecules that mediate vision. They consist of an apoprotein, opsin, covalently linked to cis-retinal. In Psalidodon fasciatus (Banded astyanax), this protein is Green-sensitive opsin-2 (G101).